We begin with the raw amino-acid sequence, 551 residues long: Membrane protein insertase YidC (551 aa).

The helical transmembrane segment at 6–26 (YFLWGALFISGYLLFLQWSQD) threads the bilayer. Residues 34 to 50 (SVAQSTQSQSETNSQMS) show a composition bias toward low complexity. Residues 34–68 (SVAQSTQSQSETNSQMSDDLPMATQSTTEANAEIP) form a disordered region. Positions 56–68 (ATQSTTEANAEIP) are enriched in polar residues. Transmembrane regions (helical) follow at residues 340–360 (TVDYGWLWWLAKPLFWLLTLI), 363–383 (FVINWGIAIILIVVCVKAIFF), 433–453 (LGGCLPILVQMPVFLSLYWVL), 464–484 (FFLWIHDLSVMDPYFILPILM), and 509–529 (IMPVAFSIFFLWFPAGLVLYW).

It belongs to the OXA1/ALB3/YidC family. Type 1 subfamily. Interacts with the Sec translocase complex via SecD. Specifically interacts with transmembrane segments of nascent integral membrane proteins during membrane integration.

Its subcellular location is the cell inner membrane. Functionally, required for the insertion and/or proper folding and/or complex formation of integral membrane proteins into the membrane. Involved in integration of membrane proteins that insert both dependently and independently of the Sec translocase complex, as well as at least some lipoproteins. Aids folding of multispanning membrane proteins. The protein is Membrane protein insertase YidC of Marinomonas sp. (strain MWYL1).